We begin with the raw amino-acid sequence, 556 residues long: Amidophosphoribosyltransferase (556 aa).

The propeptide occupies 1-57 (MCLAVGVGVRAPKHVPQIRRLGRAGRRLRCVTNCALGSCPIVTVQQPGRDFSSPREE). The active-site Nucleophile is the cysteine 58. In terms of domain architecture, Glutamine amidotransferase type-2 spans 58–284 (CGVFGVWAPG…PGELLAIDAD (227 aa)). Cysteine 299 lines the [4Fe-4S] cluster pocket. 3 residues coordinate Mg(2+): serine 346, aspartate 408, and aspartate 409. 3 residues coordinate [4Fe-4S] cluster: cysteine 445, cysteine 501, and cysteine 504.

The protein in the C-terminal section; belongs to the purine/pyrimidine phosphoribosyltransferase family. It depends on Mg(2+) as a cofactor. [4Fe-4S] cluster is required as a cofactor.

The enzyme catalyses 5-phospho-beta-D-ribosylamine + L-glutamate + diphosphate = 5-phospho-alpha-D-ribose 1-diphosphate + L-glutamine + H2O. It functions in the pathway purine metabolism; IMP biosynthesis via de novo pathway; N(1)-(5-phospho-D-ribosyl)glycinamide from 5-phospho-alpha-D-ribose 1-diphosphate: step 1/2. Functionally, catalyzes the formation of phosphoribosylamine from phosphoribosylpyrophosphate (PRPP) and glutamine. The sequence is that of Amidophosphoribosyltransferase from Mycobacterium leprae (strain TN).